The sequence spans 229 residues: Large ribosomal subunit protein uL1 (229 aa).

This sequence belongs to the universal ribosomal protein uL1 family. As to quaternary structure, part of the 50S ribosomal subunit.

Functionally, binds directly to 23S rRNA. The L1 stalk is quite mobile in the ribosome, and is involved in E site tRNA release. Its function is as follows. Protein L1 is also a translational repressor protein, it controls the translation of the L11 operon by binding to its mRNA. The chain is Large ribosomal subunit protein uL1 from Clostridium botulinum (strain Alaska E43 / Type E3).